A 264-amino-acid polypeptide reads, in one-letter code: Thymidylate synthase (264 aa).

Arg-21 is a dUMP binding site. His-51 lines the (6R)-5,10-methylene-5,6,7,8-tetrahydrofolate pocket. Residue 126–127 (RR) participates in dUMP binding. The Nucleophile role is filled by Cys-146. DUMP is bound by residues 166–169 (RSAD), Asn-177, and 207–209 (HIY). Asp-169 provides a ligand contact to (6R)-5,10-methylene-5,6,7,8-tetrahydrofolate. (6R)-5,10-methylene-5,6,7,8-tetrahydrofolate is bound at residue Ala-263.

Belongs to the thymidylate synthase family. Bacterial-type ThyA subfamily. As to quaternary structure, homodimer.

The protein resides in the cytoplasm. It catalyses the reaction dUMP + (6R)-5,10-methylene-5,6,7,8-tetrahydrofolate = 7,8-dihydrofolate + dTMP. It functions in the pathway pyrimidine metabolism; dTTP biosynthesis. Catalyzes the reductive methylation of 2'-deoxyuridine-5'-monophosphate (dUMP) to 2'-deoxythymidine-5'-monophosphate (dTMP) while utilizing 5,10-methylenetetrahydrofolate (mTHF) as the methyl donor and reductant in the reaction, yielding dihydrofolate (DHF) as a by-product. This enzymatic reaction provides an intracellular de novo source of dTMP, an essential precursor for DNA biosynthesis. The protein is Thymidylate synthase of Vesicomyosocius okutanii subsp. Calyptogena okutanii (strain HA).